A 650-amino-acid chain; its full sequence is Hemocyanin subunit 2 (650 aa).

2 O-linked (GalNAc...) serine glycosylation sites follow: Ser120 and Ser172. Positions 193, 197, and 225 each coordinate Cu cation. Asn309 carries an N-linked (GlcNAc...) asparagine glycan. 3 residues coordinate Cu cation: His344, His348, and His384.

It belongs to the tyrosinase family. Hemocyanin subfamily. Hexamer of a number of different chains, of which five have been identified. In terms of processing, contains one N-glycosylated and three O-glycosylated residues. The position of one of the O-glycosylated residues has not been determined. Post-translationally, O-linked glycan at Ser-120 may be composed of two GalNAc, three Gal, and two N-acetylneuraminic acid units for a total 1525-Da MW. As to expression, hemolymph.

Its subcellular location is the secreted. It is found in the extracellular space. Hemocyanins are copper-containing oxygen carriers occurring freely dissolved in the hemolymph of many mollusks and arthropods. The sequence is that of Hemocyanin subunit 2 from Carcinus aestuarii (Green crab).